The chain runs to 524 residues: Ribosomal protein uS12 methylthiotransferase RimO (524 aa).

A compositionally biased stretch (polar residues) spans 20-31; that stretch reads NSQTASDSTQPA. The tract at residues 20–59 is disordered; that stretch reads NSQTASDSTQPAASAYHHKANHNQNRSIEQSAQQAAEQSL. Residues 48-58 are compositionally biased toward low complexity; it reads EQSAQQAAEQS. Residues 67-177 enclose the MTTase N-terminal domain; the sequence is PKVGFVSLGC…VITAVSTHAP (111 aa). [4Fe-4S] cluster contacts are provided by Cys-76, Cys-112, Cys-141, Cys-216, Cys-220, and Cys-223. Positions 202–443 constitute a Radical SAM core domain; the sequence is LTPSHYAYLK…MAVQQQISEQ (242 aa). Residues 446 to 519 enclose the TRAM domain; it reads QEKVGKTMTV…EYDLFASYDA (74 aa).

The protein belongs to the methylthiotransferase family. RimO subfamily. It depends on [4Fe-4S] cluster as a cofactor.

It is found in the cytoplasm. The enzyme catalyses L-aspartate(89)-[ribosomal protein uS12]-hydrogen + (sulfur carrier)-SH + AH2 + 2 S-adenosyl-L-methionine = 3-methylsulfanyl-L-aspartate(89)-[ribosomal protein uS12]-hydrogen + (sulfur carrier)-H + 5'-deoxyadenosine + L-methionine + A + S-adenosyl-L-homocysteine + 2 H(+). Its function is as follows. Catalyzes the methylthiolation of an aspartic acid residue of ribosomal protein uS12. This Psychrobacter sp. (strain PRwf-1) protein is Ribosomal protein uS12 methylthiotransferase RimO.